A 130-amino-acid chain; its full sequence is Small ribosomal subunit protein uS8 (130 aa).

The protein belongs to the universal ribosomal protein uS8 family. As to quaternary structure, part of the 30S ribosomal subunit. Contacts proteins S5 and S12.

Its function is as follows. One of the primary rRNA binding proteins, it binds directly to 16S rRNA central domain where it helps coordinate assembly of the platform of the 30S subunit. In Saccharophagus degradans (strain 2-40 / ATCC 43961 / DSM 17024), this protein is Small ribosomal subunit protein uS8.